The chain runs to 149 residues: Down syndrome critical region protein 9 (149 aa).

Residues 1–41 (MGRICPVNSRARRLRARPGRPSGDSLPYHQLQGGAPRLWSP) are disordered.

In terms of tissue distribution, testis specific.

The chain is Down syndrome critical region protein 9 (DSCR9) from Homo sapiens (Human).